We begin with the raw amino-acid sequence, 354 residues long: UDP-N-acetylglucosamine--N-acetylmuramyl-(pentapeptide) pyrophosphoryl-undecaprenol N-acetylglucosamine transferase (354 aa).

UDP-N-acetyl-alpha-D-glucosamine is bound by residues 15 to 17 (TGG), N127, R163, S191, I244, 263 to 268 (ALTVSE), and Q288.

It belongs to the glycosyltransferase 28 family. MurG subfamily.

It localises to the cell inner membrane. The catalysed reaction is di-trans,octa-cis-undecaprenyl diphospho-N-acetyl-alpha-D-muramoyl-L-alanyl-D-glutamyl-meso-2,6-diaminopimeloyl-D-alanyl-D-alanine + UDP-N-acetyl-alpha-D-glucosamine = di-trans,octa-cis-undecaprenyl diphospho-[N-acetyl-alpha-D-glucosaminyl-(1-&gt;4)]-N-acetyl-alpha-D-muramoyl-L-alanyl-D-glutamyl-meso-2,6-diaminopimeloyl-D-alanyl-D-alanine + UDP + H(+). It functions in the pathway cell wall biogenesis; peptidoglycan biosynthesis. Cell wall formation. Catalyzes the transfer of a GlcNAc subunit on undecaprenyl-pyrophosphoryl-MurNAc-pentapeptide (lipid intermediate I) to form undecaprenyl-pyrophosphoryl-MurNAc-(pentapeptide)GlcNAc (lipid intermediate II). The chain is UDP-N-acetylglucosamine--N-acetylmuramyl-(pentapeptide) pyrophosphoryl-undecaprenol N-acetylglucosamine transferase from Vibrio cholerae serotype O1 (strain ATCC 39315 / El Tor Inaba N16961).